A 498-amino-acid polypeptide reads, in one-letter code: Beta-amylase 5 (498 aa).

Substrate is bound by residues aspartate 56, histidine 96, and aspartate 104. Glutamate 189 serves as the catalytic Proton donor. Residues lysine 298, histidine 303, and threonine 345 each contribute to the substrate site. Glutamate 383 acts as the Proton acceptor in catalysis. Substrate contacts are provided by residues 384–385 (NA) and arginine 423.

Belongs to the glycosyl hydrolase 14 family. As to expression, detected in phloem sieve elements.

The protein localises to the cytoplasm. It carries out the reaction Hydrolysis of (1-&gt;4)-alpha-D-glucosidic linkages in polysaccharides so as to remove successive maltose units from the non-reducing ends of the chains.. Its function is as follows. Beta-amylase activity. Major cytosolic beta-amylase isoform in rosette leaves and inflorescences stems. This chain is Beta-amylase 5 (BAM5), found in Arabidopsis thaliana (Mouse-ear cress).